The following is a 471-amino-acid chain: uncharacterized protein (471 aa).

4 consecutive transmembrane segments (helical) span residues 10–30 (ALWLLDFLTFNISFLLSLFVI), 46–66 (IDDRTYIHAVLAGICVGWFAI), 87–107 (TLIIFAIFELAIVAFPKLYFS), and 280–300 (IVVGSLAIIIFSPVLLYLYFA).

The protein belongs to the bacterial sugar transferase family.

Its subcellular location is the cell membrane. It participates in glycan metabolism; exopolysaccharide biosynthesis. Functionally, may function as a sugar transferase. This is an uncharacterized protein from Haemophilus influenzae (strain ATCC 51907 / DSM 11121 / KW20 / Rd).